The chain runs to 533 residues: MYLSIIILPLLGSIVAGFFGRKVGVSGAQLITCLSVIITTGLAILAFFEVGFNNIPVTINLFRWIDSEWYNILWGFQFDSLTVAMLIPVLIISSLVHIYSISYMSHDPRGRVRGKRVYGDKLSNSGEVLKLKVPSCSWKTMSGWSNYSGTVTSLKMSENKMDNRGSKSVVIDSNSTVKEQRVDGSWSIKSHLMDLRCTLRGFERNRGIKLGFNLQQGWNSAKIPSKQFDFKKKFSTYNSTLRVNPWVWSGLIDGEGSFNIIVDRNKSRKLGWRAQLKFQLSLHTKDLNLLYLLQQYLGGIGSIHLARNRDIVNYSIDSIEDLNKLIIHLENYPLLTQKAADFFLFKQAVKLVNNKAHLTVEGLNQIVNIKASMNLGLSDTLKSEFAGYTPVERPVINCDNVFLDPYWISGFVSAEGNFDVRMPSTNSKLGYRVQLRFRISTLRVDIRLMEKIVEYFGSGKIYKYGGKSAVSLTIVDFTDITNILVPFFNKYPIIGIKLYDYLDWCKIHSLMINRSHLTVEGINSISLLLGRRR.

Helical transmembrane passes span Met1 to Arg21, Leu30 to Val50, and Leu81 to Ile101. A ndh-5 exon 1 encoded region spans residues Met1 to Pro108. Residues Arg109–Arg533 are ndh-5 intron 1 encoded.

This sequence in the N-terminal section; belongs to the complex I subunit 5 family. In the C-terminal section; belongs to the LAGLIDADG endonuclease family.

It is found in the mitochondrion membrane. Mitochondrial DNA endonuclease involved in intron homing. The sequence is that of Probable intron-encoded endonuclease 3 from Neurospora crassa (strain ATCC 24698 / 74-OR23-1A / CBS 708.71 / DSM 1257 / FGSC 987).